Consider the following 197-residue polypeptide: MSWGRLSRLLKPALLCGALAVPGLAGTMCASRDDWRCARSMHEFAAKDIDGHMVCLDKYRGCVCIVTNVASQUGKTDVNYTQLVDLHARYAECGLRILAFPCNQFGRQEPGSNQEIKEFAAGYNVRFDMYSKICVNGDDAHPLWKWMKVQPKGRGMLGNAIKWNFTKFLIDKNGCVVKRYGPMEEPQVIEKDLPCYL.

Phosphoserine is present on Ser-40. Residue Sec-73 is part of the active site. A non-standard amino acid (selenocysteine) is located at residue Sec-73. Phosphoserine is present on Val-78.

The protein belongs to the glutathione peroxidase family. In terms of assembly, monomer. Has a tendency to form higher mass oligomers. Interacts with FUNDC1; this interaction promotes GPX4 recruitment into mitochondria through TOM/TIM complex where it is degraded by mitophagy. In terms of tissue distribution, present primarily in testis. Expressed in flagella of epididymal sperm. Isoform Cytoplasmic: Highly expressed in testis. Present in spermatogonia, spermatocyte and spermatid (at protein level).

Its subcellular location is the nucleus. It localises to the nucleolus. The protein localises to the mitochondrion. It is found in the cytoplasm. The enzyme catalyses a hydroperoxy polyunsaturated fatty acid + 2 glutathione = a hydroxy polyunsaturated fatty acid + glutathione disulfide + H2O. The catalysed reaction is 2 glutathione + H2O2 = glutathione disulfide + 2 H2O. It catalyses the reaction tert-butyl hydroperoxide + 2 glutathione = tert-butanol + glutathione disulfide + H2O. It carries out the reaction cumene hydroperoxide + 2 glutathione = 2-phenylpropan-2-ol + glutathione disulfide + H2O. The enzyme catalyses (9S)-hydroperoxy-(10E,12Z)-octadecadienoate + 2 glutathione = (9S)-hydroxy-(10E,12Z)-octadecadienoate + glutathione disulfide + H2O. The catalysed reaction is (13S)-hydroperoxy-(9Z,11E)-octadecadienoate + 2 glutathione = (13S)-hydroxy-(9Z,11E)-octadecadienoate + glutathione disulfide + H2O. It catalyses the reaction (5S)-hydroperoxy-(6E,8Z,11Z,14Z)-eicosatetraenoate + 2 glutathione = (5S)-hydroxy-(6E,8Z,11Z,14Z)-eicosatetraenoate + glutathione disulfide + H2O. It carries out the reaction (12R)-hydroperoxy-(5Z,8Z,10E,14Z)-eicosatetraenoate + 2 glutathione = (12R)-hydroxy-(5Z,8Z,10E,14Z)-eicosatetraenoate + glutathione disulfide + H2O. The enzyme catalyses (12S)-hydroperoxy-(5Z,8Z,10E,14Z)-eicosatetraenoate + 2 glutathione = (12S)-hydroxy-(5Z,8Z,10E,14Z)-eicosatetraenoate + glutathione disulfide + H2O. The catalysed reaction is (15S)-hydroperoxy-(5Z,8Z,11Z,13E)-eicosatetraenoate + 2 glutathione = (15S)-hydroxy-(5Z,8Z,11Z,13E)-eicosatetraenoate + glutathione disulfide + H2O. It catalyses the reaction (5S)-hydroperoxy-(6E,8Z,11Z,14Z,17Z)-eicosapentaenoate + 2 glutathione = (5S)-hydroxy-(6E,8Z,11Z,14Z,17Z)-eicosapentaenoate + glutathione disulfide + H2O. It carries out the reaction (12S)-hydroperoxy-(5Z,8Z,10E,14Z,17Z)-eicosapentaenoate + 2 glutathione = (12S)-hydroxy-(5Z,8Z,10E,14Z,17Z)-eicosapentaenoate + glutathione disulfide + H2O. The enzyme catalyses (15S)-hydroperoxy-(5Z,8Z,11Z,13E,17Z)-eicosapentaenoate + 2 glutathione = (15S)-hydroxy-(5Z,8Z,11Z,13E,17Z)-eicosapentaenoate + glutathione disulfide + H2O. The catalysed reaction is (15S)-hydroperoxy-(11Z,13E)-eicosadienoate + 2 glutathione = (15S)-hydroxy-(11Z,13E)-eicosadienoate + glutathione disulfide + H2O. It catalyses the reaction (17S)-hydroperoxy-(4Z,7Z,10Z,13Z,15E,19Z)-docosahexaenoate + 2 glutathione = (17S)-hydroxy-(4Z,7Z,10Z,13Z,15E,19Z)-docosahexaenoate + glutathione disulfide + H2O. It carries out the reaction a hydroperoxy-1,2-diacyl-glycero-3-phosphocholine + 2 glutathione = a hydroxy-1,2-diacyl-glycero-3-phosphocholine + glutathione disulfide + H2O. In terms of biological role, essential antioxidant peroxidase that directly reduces phospholipid hydroperoxide even if they are incorporated in membranes and lipoproteins. Can also reduce fatty acid hydroperoxide, cholesterol hydroperoxide and thymine hydroperoxide. Plays a key role in protecting cells from oxidative damage by preventing membrane lipid peroxidation. Required to prevent cells from ferroptosis, a non-apoptotic cell death resulting from an iron-dependent accumulation of lipid reactive oxygen species. The presence of selenocysteine (Sec) versus Cys at the active site is essential for life: it provides resistance to overoxidation and prevents cells against ferroptosis. The presence of Sec at the active site is also essential for the survival of a specific type of parvalbumin-positive interneurons, thereby preventing against fatal epileptic seizures. May be required to protect cells from the toxicity of ingested lipid hydroperoxides. Required for normal sperm development and male fertility. Essential for maturation and survival of photoreceptor cells. Plays a role in a primary T-cell response to viral and parasitic infection by protecting T-cells from ferroptosis and by supporting T-cell expansion. Plays a role of glutathione peroxidase in platelets in the arachidonic acid metabolism. Reduces hydroperoxy ester lipids formed by a 15-lipoxygenase that may play a role as down-regulator of the cellular 15-lipoxygenase pathway. Can also reduce small soluble hydroperoxides such as H2O2, cumene hydroperoxide and tert-butyl hydroperoxide. Specifically able to suppress the production of leukotriene and prostaglandin in response to several stimuli by reducing fatty acid hydroperoxide. Functionally, specifically required to prevent mitochondrial cell death by mediating reduction of cardiolipin hydroperoxide. Also required for normal sperm development and male fertility. Its function is as follows. Required for male fertility by stabilizing the condensed chromatin in sperm nuclei. The protein is Phospholipid hydroperoxide glutathione peroxidase of Rattus norvegicus (Rat).